Reading from the N-terminus, the 208-residue chain is ATP-dependent Clp protease proteolytic subunit 1 (208 aa).

Residue Ser108 is the Nucleophile of the active site. Residue His133 is part of the active site.

Belongs to the peptidase S14 family. Fourteen ClpP subunits assemble into 2 heptameric rings which stack back to back to give a disk-like structure with a central cavity, resembling the structure of eukaryotic proteasomes.

It localises to the cytoplasm. It carries out the reaction Hydrolysis of proteins to small peptides in the presence of ATP and magnesium. alpha-casein is the usual test substrate. In the absence of ATP, only oligopeptides shorter than five residues are hydrolyzed (such as succinyl-Leu-Tyr-|-NHMec, and Leu-Tyr-Leu-|-Tyr-Trp, in which cleavage of the -Tyr-|-Leu- and -Tyr-|-Trp bonds also occurs).. Functionally, cleaves peptides in various proteins in a process that requires ATP hydrolysis. Has a chymotrypsin-like activity. Plays a major role in the degradation of misfolded proteins. The chain is ATP-dependent Clp protease proteolytic subunit 1 from Corynebacterium glutamicum (strain ATCC 13032 / DSM 20300 / JCM 1318 / BCRC 11384 / CCUG 27702 / LMG 3730 / NBRC 12168 / NCIMB 10025 / NRRL B-2784 / 534).